We begin with the raw amino-acid sequence, 574 residues long: Glutamate--tRNA ligase (574 aa).

Residues 109–119 (PNPDFVIHMGN) carry the 'HIGH' region motif.

It belongs to the class-I aminoacyl-tRNA synthetase family. Glutamate--tRNA ligase type 2 subfamily.

The protein localises to the cytoplasm. The enzyme catalyses tRNA(Glu) + L-glutamate + ATP = L-glutamyl-tRNA(Glu) + AMP + diphosphate. Its function is as follows. Catalyzes the attachment of glutamate to tRNA(Glu) in a two-step reaction: glutamate is first activated by ATP to form Glu-AMP and then transferred to the acceptor end of tRNA(Glu). This is Glutamate--tRNA ligase from Aeropyrum pernix (strain ATCC 700893 / DSM 11879 / JCM 9820 / NBRC 100138 / K1).